A 358-amino-acid polypeptide reads, in one-letter code: Insulin gene enhancer protein isl-2b (358 aa).

2 consecutive LIM zinc-binding domains span residues 27-80 (CVGC…CKRD) and 89-143 (CAKC…RADH). The segment at residues 191 to 250 (TTRVRTVLNEKQLHTLRTCYNANPRPDALMKEQLVEMTGLSPRVIRVWFQNKRCKDKKRS) is a DNA-binding region (homeobox). A compositionally biased stretch (low complexity) spans 325–335 (ESGSLGNSSGS). Residues 325 to 358 (ESGSLGNSSGSDVTSLSSQLPDTPNSMVPSPVET) form a disordered region. The segment covering 336–358 (DVTSLSSQLPDTPNSMVPSPVET) has biased composition (polar residues).

The protein localises to the nucleus. Binds to one of the cis-acting domain of the insulin gene enhancer. May be involved in the regional specification of the myotome and also in target recognition by the caudal primary neuron. This chain is Insulin gene enhancer protein isl-2b (isl2b), found in Danio rerio (Zebrafish).